The following is a 178-amino-acid chain: Fatty-acid and retinol-binding protein 1 (178 aa).

A signal peptide spans 1–16; that stretch reads MYHRLILLALVGTTMA. Coiled-coil stretches lie at residues 67 to 89 and 130 to 153; these read DAALEALKDKSDKLYKNAVELRN and KQAARDIIAKYQALSEETKEELKV.

Belongs to the fatty-acid and retinol-binding protein (FARBP) family. Not glycosylated.

The protein resides in the secreted. In terms of biological role, binds retinol and different fatty acids. The sequence is that of Fatty-acid and retinol-binding protein 1 from Brugia pahangi (Filarial nematode worm).